The chain runs to 268 residues: Exopolysaccharide production negative regulator (268 aa).

An N-terminal signal peptide occupies residues 1–22 (MRAGELKSLRVAVLGMSLAVGA).

In terms of biological role, negatively modulates exopolysaccharide (EPS) biosynthesis. This chain is Exopolysaccharide production negative regulator (exoR), found in Rhizobium meliloti (strain 1021) (Ensifer meliloti).